A 63-amino-acid polypeptide reads, in one-letter code: Small ribosomal subunit protein eS17 (63 aa).

Belongs to the eukaryotic ribosomal protein eS17 family.

In Methanococcus maripaludis (strain C6 / ATCC BAA-1332), this protein is Small ribosomal subunit protein eS17.